Reading from the N-terminus, the 154-residue chain is Large ribosomal subunit protein uL30 (154 aa).

Belongs to the universal ribosomal protein uL30 family. In terms of assembly, part of the 50S ribosomal subunit.

The chain is Large ribosomal subunit protein uL30 from Methanocaldococcus jannaschii (strain ATCC 43067 / DSM 2661 / JAL-1 / JCM 10045 / NBRC 100440) (Methanococcus jannaschii).